A 334-amino-acid chain; its full sequence is Ketol-acid reductoisomerase (NADP(+)) (334 aa).

A KARI N-terminal Rossmann domain is found at 3 to 183 (ATIYYENDAD…GGTRGGVIET (181 aa)). NADP(+) is bound by residues 26 to 29 (YGSQ), R49, S52, and 84 to 87 (DEVQ). The active site involves H109. Residue G135 coordinates NADP(+). In terms of domain architecture, KARI C-terminal knotted spans 184–329 (TFAEETETDL…LGLRRMMNWI (146 aa)). Mg(2+) contacts are provided by D192, E196, E228, and E232. S253 provides a ligand contact to substrate.

It belongs to the ketol-acid reductoisomerase family. Mg(2+) serves as cofactor.

It catalyses the reaction (2R)-2,3-dihydroxy-3-methylbutanoate + NADP(+) = (2S)-2-acetolactate + NADPH + H(+). The catalysed reaction is (2R,3R)-2,3-dihydroxy-3-methylpentanoate + NADP(+) = (S)-2-ethyl-2-hydroxy-3-oxobutanoate + NADPH + H(+). Its pathway is amino-acid biosynthesis; L-isoleucine biosynthesis; L-isoleucine from 2-oxobutanoate: step 2/4. It participates in amino-acid biosynthesis; L-valine biosynthesis; L-valine from pyruvate: step 2/4. Functionally, involved in the biosynthesis of branched-chain amino acids (BCAA). Catalyzes an alkyl-migration followed by a ketol-acid reduction of (S)-2-acetolactate (S2AL) to yield (R)-2,3-dihydroxy-isovalerate. In the isomerase reaction, S2AL is rearranged via a Mg-dependent methyl migration to produce 3-hydroxy-3-methyl-2-ketobutyrate (HMKB). In the reductase reaction, this 2-ketoacid undergoes a metal-dependent reduction by NADPH to yield (R)-2,3-dihydroxy-isovalerate. This chain is Ketol-acid reductoisomerase (NADP(+)), found in Rhodopirellula baltica (strain DSM 10527 / NCIMB 13988 / SH1).